The primary structure comprises 427 residues: Light-independent protochlorophyllide reductase subunit N (427 aa).

Residues Cys-28, Cys-53, and Cys-114 each coordinate [4Fe-4S] cluster.

Belongs to the BchN/ChlN family. Protochlorophyllide reductase is composed of three subunits; BchL, BchN and BchB. Forms a heterotetramer of two BchB and two BchN subunits. The cofactor is [4Fe-4S] cluster.

The enzyme catalyses chlorophyllide a + oxidized 2[4Fe-4S]-[ferredoxin] + 2 ADP + 2 phosphate = protochlorophyllide a + reduced 2[4Fe-4S]-[ferredoxin] + 2 ATP + 2 H2O. It participates in porphyrin-containing compound metabolism; bacteriochlorophyll biosynthesis (light-independent). In terms of biological role, component of the dark-operative protochlorophyllide reductase (DPOR) that uses Mg-ATP and reduced ferredoxin to reduce ring D of protochlorophyllide (Pchlide) to form chlorophyllide a (Chlide). This reaction is light-independent. The NB-protein (BchN-BchB) is the catalytic component of the complex. This is Light-independent protochlorophyllide reductase subunit N from Jannaschia sp. (strain CCS1).